The following is a 281-amino-acid chain: Carbonic anhydrase (281 aa).

Zn(2+) is bound by residues Cys106, His161, and Cys164.

This sequence belongs to the beta-class carbonic anhydrase family. It depends on Zn(2+) as a cofactor.

It localises to the cytoplasm. The protein resides in the nucleus. It is found in the mitochondrion intermembrane space. It carries out the reaction hydrogencarbonate + H(+) = CO2 + H2O. Its activity is regulated as follows. Amines and amino acids act as activators of catalytic activity, whereas natural product-based phenols, dithiocarbamates, aliphatic and aromatic carboxylates, boronic acids, and sulfonamides act as inhibitors of enzymatic activity. Also inhibited by anions such as cyanide and carbonate, and to a lesser extent by sulfate, phenylboronic, and phenyl arsonic acid. Its function is as follows. Catalyzes the reversible hydration of CO(2) to H(2)CO(3). The main role may be to provide inorganic carbon for the bicarbonate-dependent carboxylation reactions catalyzed by pyruvate carboxylase, acetyl-CoA carboxylase and carbamoyl-phosphate synthetase. Involved in protection against oxidative damage. Acts as a CO(2) chemosensor and induces CO(2)-mediated filamentation. Essential for pathological growth in niches where sufficient CO(2) is not supplied by the host. Necessary for white-to-opaque switching at low CO(2) concentrations. The protein is Carbonic anhydrase (NCE103) of Candida albicans (strain SC5314 / ATCC MYA-2876) (Yeast).